We begin with the raw amino-acid sequence, 311 residues long: Deoxyhypusine hydroxylase (311 aa).

HEAT-like PBS-type repeat units follow at residues L69–N95, V102–N128, E196–D222, F228–D254, and V261–D287. Fe cation is bound by residues H71, E72, H104, and E105. Positions 230, 231, 263, and 264 each coordinate Fe cation.

Belongs to the deoxyhypusine hydroxylase family. Fe(2+) is required as a cofactor.

It is found in the cytoplasm. The protein localises to the nucleus. The catalysed reaction is [eIF5A protein]-deoxyhypusine + AH2 + O2 = [eIF5A protein]-hypusine + A + H2O. The protein operates within protein modification; eIF5A hypusination. In terms of biological role, catalyzes the hydroxylation of the N(6)-(4-aminobutyl)-L-lysine intermediate to form hypusine, an essential post-translational modification only found in mature eIF-5A factor. The chain is Deoxyhypusine hydroxylase from Debaryomyces hansenii (strain ATCC 36239 / CBS 767 / BCRC 21394 / JCM 1990 / NBRC 0083 / IGC 2968) (Yeast).